Reading from the N-terminus, the 135-residue chain is Retinol-binding protein 1 (135 aa).

The important for interaction with STRA6 stretch occupies residues 22 to 32 (RALDVNVALRK). All-trans-retinol-binding residues include K41, M63, and Q109.

It belongs to the calycin superfamily. Fatty-acid binding protein (FABP) family. In terms of assembly, interacts (only as retinol-free apoprotein) with STRA6.

The protein localises to the cytoplasm. It is found in the lipid droplet. In terms of biological role, cytoplasmic retinol-binding protein. Accepts retinol from the transport protein STRA6, and thereby contributes to retinol uptake, storage and retinoid homeostasis. The protein is Retinol-binding protein 1 (Rbp1) of Rattus norvegicus (Rat).